The sequence spans 58 residues: Large ribosomal subunit protein uL30 (58 aa).

Belongs to the universal ribosomal protein uL30 family. Part of the 50S ribosomal subunit.

The protein is Large ribosomal subunit protein uL30 of Bacteroides fragilis (strain ATCC 25285 / DSM 2151 / CCUG 4856 / JCM 11019 / LMG 10263 / NCTC 9343 / Onslow / VPI 2553 / EN-2).